The following is a 446-amino-acid chain: Transcription factor SOX-3 (446 aa).

2 disordered regions span residues 29-48 (PFPPDSLAHRPPSSAPTESQ) and 87-140 (PVGT…DRVK). 2 stretches are compositionally biased toward gly residues: residues 96 to 107 (GTGGPAAPGGAG) and 117 to 134 (ANSGGGSSGGASGGGGGT). The HMG box DNA-binding region spans 139-207 (VKRPMNAFMV…VHMKEYPDYK (69 aa)). The 9aaTAD signature appears at 399-407 (DMISMYLPP).

As to quaternary structure, interacts with SOX2 and FGFR1.

The protein localises to the nucleus. Functionally, transcription factor required during the formation of the hypothalamo-pituitary axis. May function as a switch in neuronal development. Keeps neural cells undifferentiated by counteracting the activity of proneural proteins and suppresses neuronal differentiation. Required also within the pharyngeal epithelia for craniofacial morphogenesis. Controls a genetic switch in male development. Is necessary for initiating male sex determination by directing the development of supporting cell precursors (pre-Sertoli cells) as Sertoli rather than granulosa cells. This is Transcription factor SOX-3 (SOX3) from Homo sapiens (Human).